The chain runs to 463 residues: Argininosuccinate lyase (463 aa).

Belongs to the lyase 1 family. Argininosuccinate lyase subfamily.

The protein localises to the cytoplasm. The enzyme catalyses 2-(N(omega)-L-arginino)succinate = fumarate + L-arginine. It functions in the pathway amino-acid biosynthesis; L-arginine biosynthesis; L-arginine from L-ornithine and carbamoyl phosphate: step 3/3. This is Argininosuccinate lyase from Prochlorococcus marinus (strain NATL2A).